Consider the following 152-residue polypeptide: Xanthine-guanine phosphoribosyltransferase (152 aa).

5-phospho-alpha-D-ribose 1-diphosphate-binding positions include 37–38, R69, and 88–96; these read RG and DDLVDSGDT. R69 contributes to the GMP binding site. D89 contacts Mg(2+). Residues D92 and I135 each coordinate guanine. D92 and I135 together coordinate xanthine. Residues 92–96 and 134–135 each bind GMP; these read DSGDT and WI.

Belongs to the purine/pyrimidine phosphoribosyltransferase family. XGPT subfamily. Homotetramer. Requires Mg(2+) as cofactor.

It localises to the cell inner membrane. It catalyses the reaction GMP + diphosphate = guanine + 5-phospho-alpha-D-ribose 1-diphosphate. The catalysed reaction is XMP + diphosphate = xanthine + 5-phospho-alpha-D-ribose 1-diphosphate. It carries out the reaction IMP + diphosphate = hypoxanthine + 5-phospho-alpha-D-ribose 1-diphosphate. It functions in the pathway purine metabolism; GMP biosynthesis via salvage pathway; GMP from guanine: step 1/1. It participates in purine metabolism; XMP biosynthesis via salvage pathway; XMP from xanthine: step 1/1. Functionally, purine salvage pathway enzyme that catalyzes the transfer of the ribosyl-5-phosphate group from 5-phospho-alpha-D-ribose 1-diphosphate (PRPP) to the N9 position of the 6-oxopurines guanine and xanthine to form the corresponding ribonucleotides GMP (guanosine 5'-monophosphate) and XMP (xanthosine 5'-monophosphate), with the release of PPi. To a lesser extent, also acts on hypoxanthine. In Aliivibrio salmonicida (strain LFI1238) (Vibrio salmonicida (strain LFI1238)), this protein is Xanthine-guanine phosphoribosyltransferase.